The chain runs to 219 residues: Probable GTP-binding protein EngB (219 aa).

Positions 24-207 constitute an EngB-type G domain; it reads VQPEIAFAGR…HELIESWVRP (184 aa). GTP is bound by residues 32 to 39, 59 to 63, 81 to 84, 148 to 151, and 186 to 188; these read GRSNAGKS, GRTQH, DLPG, TKCD, and FSA. Mg(2+) is bound by residues serine 39 and threonine 61.

It belongs to the TRAFAC class TrmE-Era-EngA-EngB-Septin-like GTPase superfamily. EngB GTPase family. Mg(2+) is required as a cofactor.

Its function is as follows. Necessary for normal cell division and for the maintenance of normal septation. The chain is Probable GTP-binding protein EngB from Burkholderia ambifaria (strain MC40-6).